A 431-amino-acid chain; its full sequence is FAD-dependent monooxygenase nodY1 (431 aa).

Positions 1–21 (MASTGVSVIVVGLGLAGLTTA) are cleaved as a signal peptide. Residues E35 and R110 each contribute to the FAD site. Residue R188 is part of the active site. An FAD-binding site is contributed by D313.

It belongs to the paxM FAD-dependent monooxygenase family. It depends on FAD as a cofactor.

The protein operates within secondary metabolite biosynthesis. In terms of biological role, FAD-dependent monooxygenase; part of the gene cluster that mediates the biosynthesis of the indole diterpenes nodulisporic acids (NA). Nodulisporic acid A (NAA) and its chemically modified derivatives are of particular significance because of their highly potent insecticidal activity against blood-feeding arthropods and lack of observable adverse effects on mammals, in particular the tremogenicity associated with the paspaline-derived IDTs is not observed. The geranylgeranyl diphosphate (GGPP) synthase ggs1, localized outside of the cluster, is proposed to catalyze the first step in nodulisporic acid biosynthesis via conversion of farnesyl pyrophosphate and isopentyl pyrophosphate into geranylgeranyl pyrophosphate (GGPP). Condensation of indole-3-glycerol phosphate with GGPP by the prenyl transferase nodC then forms 3-geranylgeranylindole (3-GGI). Epoxidation by the FAD-dependent monooxygenase nodM leads to a single-epoxidized-GGI that is substrate of the terpene cyclase nodB for cyclization to yield emindole SB. The terminal methyl carbon, C28, of emindole SB is then oxidized by the cytochrome P450 monooxygenase nodW to produce nodulisporic acid F (NAF), the pentacyclic core of NAA. NAF is converted to nodulisporic acid E (NAE) via prenylation. This step is probably performed by one of the indole diterpene prenyltransferases nodD1 or nodD2. Several oxidation steps performed by the FAD-linked oxidoreductase nodO and one of the cytochrome P450 monooxygenase nodR, nodX or nodZ further convert NAE to nodulisporic acid D (NAD). NAD is substrate of cytochrome P450 monooxygenase nodJ to produce the precursor of nodulisporic acid C (NAC), converted to NAC by one of the indole diterpene prenyltransferases nodD1 or nodD2. The FAD-dependent monooxygenase nodY2 then oxidizes NAC to nodulisporic acid B (NAB). Finally NAB is converted to NAA by one of the cytochrome P450 monooxygenases nodR, nodX or nodZ. The protein is FAD-dependent monooxygenase nodY1 of Hypoxylon pulicicidum.